Reading from the N-terminus, the 382-residue chain is MEARNAEGLESCIEKIQEVKLSSFAELKAFRERKVALITGITGQDGSYLAELLLSKGYKVHGIIRRSSSFNTARIEHLYGNPVTHNGSASFSLHYGDMTDSSCLIKLISTIEPTEIYHLAAQSHVKVSFDLPEYTAEVDAVGTLRLLDAIHACRLTEKVRFYQASTSELYGKVQEIPQSELTPFYPRSPYAVAKMYGYWIVVNYREAYKMFACNGILFNHESPRRGETFVTRKITRSVAKISLRQQEHIELGNLSALRDWGHAKEYVEAMWRILQQDTPDDFVIATGKQFSVREFCNLAFAEIGEQLVWEGEGVDEVGKNQDGVVRVKVSPKYYRPTEVETLLGNPAKARKTLGWEPKITVPELVKEMVASDIALMEADPMA.

Residues 40 to 45 (GITGQD), 97 to 98 (DM), 119 to 123 (LAAQS), and Tyr-134 each bind NADP(+). Thr-166 is an active-site residue. Active-site nucleophile residues include Glu-168 and Tyr-190. Residues Lys-194, His-220, and Arg-225 each contribute to the NADP(+) site.

This sequence belongs to the NAD(P)-dependent epimerase/dehydratase family. GDP-mannose 4,6-dehydratase subfamily. Requires NADP(+) as cofactor.

The catalysed reaction is GDP-alpha-D-mannose = GDP-4-dehydro-alpha-D-rhamnose + H2O. The protein operates within nucleotide-sugar biosynthesis; GDP-L-fucose biosynthesis via de novo pathway; GDP-L-fucose from GDP-alpha-D-mannose: step 1/2. Its function is as follows. Catalyzes the conversion of GDP-D-mannose to GDP-4-dehydro-6-deoxy-D-mannose. The chain is GDP-mannose 4,6 dehydratase 2 (gmd-2) from Caenorhabditis elegans.